The chain runs to 234 residues: Sugar fermentation stimulation protein homolog (234 aa).

This sequence belongs to the SfsA family.

The polypeptide is Sugar fermentation stimulation protein homolog (Shewanella putrefaciens (strain CN-32 / ATCC BAA-453)).